The chain runs to 295 residues: Aquaporin NIP2-1 (295 aa).

2 helical membrane passes run 49–69 (VVSEVVSTFLLVFVTCGAAGI) and 83–103 (SVAGGLIVTVMIYAVGHISGA). The NPA 1 signature appears at 106–108 (NPA). 3 helical membrane passes run 124–146 (VPFYWAAQFTGSICASFVLKAVL), 164–184 (SLVIEIIVTFNMMFVTLAVAT), and 192–212 (LAGLAVGSAVCITSIFAGAVS). An NPA 2 motif is present at residues 217-219 (NPA). Residues 230–250 (LYTGLWIYFLGPVLGTLSGAW) traverse the membrane as a helical segment.

This sequence belongs to the MIP/aquaporin (TC 1.A.8) family. NIP (TC 1.A.8.12) subfamily.

Its subcellular location is the membrane. Functionally, aquaporins facilitate the transport of water and small neutral solutes across cell membranes. This is Aquaporin NIP2-1 (NIP2-1) from Zea mays (Maize).